A 472-amino-acid chain; its full sequence is Type I restriction enzyme BthVORF4518P methylase subunit (472 aa).

S-adenosyl-L-methionine contacts are provided by residues 151 to 156 (QYFTPR), 181 to 183 (TGG), D214, and 243 to 244 (DS).

Belongs to the N(4)/N(6)-methyltransferase family. The type I restriction/modification system is composed of three polypeptides R, M and S; the restriction enzyme has stoichiometry R(2)M(2)S(1) while the methyltransferase is M(2)S(1).

The catalysed reaction is a 2'-deoxyadenosine in DNA + S-adenosyl-L-methionine = an N(6)-methyl-2'-deoxyadenosine in DNA + S-adenosyl-L-homocysteine + H(+). Its function is as follows. The subtype gamma methyltransferase (M) subunit of a type I restriction enzyme. The M and S subunits together form a methyltransferase (MTase) that methylates two adenine residues of an undetermined sequence. In the presence of the R subunit the complex can also act as an endonuclease, binding to the same target sequence but cutting the DNA some distance from this site. Whether the DNA is cut or modified depends on the methylation state of the target sequence. When the target site is unmodified, the DNA is cut. When the target site is hemimethylated, the complex acts as a maintenance MTase modifying the DNA so that both strands become methylated. After locating a non-methylated recognition site, the enzyme complex serves as a molecular motor that translocates DNA in an ATP-dependent manner until a collision occurs that triggers cleavage. This chain is Type I restriction enzyme BthVORF4518P methylase subunit, found in Bacteroides thetaiotaomicron (strain ATCC 29148 / DSM 2079 / JCM 5827 / CCUG 10774 / NCTC 10582 / VPI-5482 / E50).